The primary structure comprises 352 residues: Gap junction alpha-4 protein (352 aa).

The Cytoplasmic portion of the chain corresponds to 2 to 23 (GDWEFLEKLLDQVQEHSTSIGK). A helical membrane pass occupies residues 24–46 (IWLMVLFIFRILILGLAGESVWG). Over 47 to 76 (DEQSDFTCNTEQPGCTNVCYDKAFPISHVR) the chain is Extracellular. A helical transmembrane segment spans residues 77–99 (YWVLQFLFVSTPTLFYLGHVIYL). The Cytoplasmic segment spans residues 100 to 153 (SRKEEKLKQKESELRALDDKEQVEQAIAIIEKKKLKLYIQEDGTVKIKGALMYT). Residues 154-176 (YLTSVIFKSIFEAGFLLGQWYLY) form a helical membrane-spanning segment. The Extracellular portion of the chain corresponds to 177 to 208 (GFVMTPIYVCERVPCPHKVDCFVSRPMEKTIF). A helical transmembrane segment spans residues 209-231 (IIFMLVVSLISLFLNVLELIHLI). Topologically, residues 232–352 (CKSMIHALKK…SSSASKKQYV (121 aa)) are cytoplasmic. The segment at 332–352 (HSTVEKASTRASSSASKKQYV) is disordered. Residues 340-352 (TRASSSASKKQYV) show a composition bias toward low complexity.

Belongs to the connexin family. Alpha-type (group II) subfamily. A connexon is composed of a hexamer of connexins. As to expression, expressed in ovarian somatic cells, heart, leg muscle, liver and eye but not in brain.

The protein localises to the cell membrane. Its subcellular location is the cell junction. The protein resides in the gap junction. In terms of biological role, one gap junction consists of a cluster of closely packed pairs of transmembrane channels, the connexons, through which materials of low MW diffuse from one cell to a neighboring cell. This Xenopus laevis (African clawed frog) protein is Gap junction alpha-4 protein (gja4).